Here is a 690-residue protein sequence, read N- to C-terminus: Protein-glucosylgalactosylhydroxylysine glucosidase (690 aa).

Residue 299-300 participates in substrate binding; sequence WD. The active-site Proton donor is the glutamate 429. 497-498 lines the substrate pocket; it reads KQ.

The protein belongs to the glycosyl hydrolase 65 family.

It catalyses the reaction (5R)-5-O-[alpha-D-glucosyl-(1-&gt;2)-beta-D-galactosyl]-5-hydroxy-L-lysyl-[collagen] + H2O = (5R)-5-O-(beta-D-galactosyl)-5-hydroxy-L-lysyl-[collagen] + D-glucose. Its function is as follows. Catalyzes the hydrolysis of glucose from the disaccharide unit linked to hydroxylysine residues of collagen and collagen-like proteins. This Mus musculus (Mouse) protein is Protein-glucosylgalactosylhydroxylysine glucosidase.